Reading from the N-terminus, the 264-residue chain is 3-methyl-2-oxobutanoate hydroxymethyltransferase (264 aa).

Mg(2+)-binding residues include D45 and D84. Residues 45–46, D84, and K112 each bind 3-methyl-2-oxobutanoate; that span reads DS. E114 contacts Mg(2+). The Proton acceptor role is filled by E181.

It belongs to the PanB family. Homodecamer; pentamer of dimers. Mg(2+) serves as cofactor.

It localises to the cytoplasm. It carries out the reaction 3-methyl-2-oxobutanoate + (6R)-5,10-methylene-5,6,7,8-tetrahydrofolate + H2O = 2-dehydropantoate + (6S)-5,6,7,8-tetrahydrofolate. Its pathway is cofactor biosynthesis; (R)-pantothenate biosynthesis; (R)-pantoate from 3-methyl-2-oxobutanoate: step 1/2. Catalyzes the reversible reaction in which hydroxymethyl group from 5,10-methylenetetrahydrofolate is transferred onto alpha-ketoisovalerate to form ketopantoate. This Escherichia fergusonii (strain ATCC 35469 / DSM 13698 / CCUG 18766 / IAM 14443 / JCM 21226 / LMG 7866 / NBRC 102419 / NCTC 12128 / CDC 0568-73) protein is 3-methyl-2-oxobutanoate hydroxymethyltransferase.